Reading from the N-terminus, the 92-residue chain is Endoribonuclease VapD homolog (92 aa).

The protein belongs to the VapD ribonuclease family. As to quaternary structure, homodimer.

Cleaves ssRNA, mostly between U:A. The sequence is that of Endoribonuclease VapD homolog from Neisseria gonorrhoeae.